Consider the following 83-residue polypeptide: Lipolysis-activating peptide 1-alpha chain (83 aa).

The N-terminal stretch at 1–21 (MNIILFYFMPILISLPGLLAS) is a signal peptide. One can recognise an LCN-type CS-alpha/beta domain in the interval 22 to 83 (GTYPNDVYGL…LFWDVYKEHC (62 aa)). Cystine bridges form between C35-C58, C44-C63, and C48-C65.

It belongs to the long (3 C-C) scorpion toxin superfamily. Monomer (edited version) and heterodimer (non-edited version) of this alpha chain and a beta chain (AC P0CI43). As to expression, expressed by the venom gland.

It localises to the secreted. Its function is as follows. The heterodimer non-edited LVP1 induces lipolysis in rat adipocytes. Induction of lipolysis by LVP1 appears to be mediated through the beta-2 adrenergic receptor pathway (ADRB2). Functionally, the edited BmKBTx-like, similar to beta-toxins, may modulate voltage-gated sodium channels (Nav) and may block voltage-gated potassium channels (Kv). This Lychas mucronatus (Chinese swimming scorpion) protein is Lipolysis-activating peptide 1-alpha chain.